The following is a 622-amino-acid chain: Probable potassium transport system protein Kup (622 aa).

12 helical membrane-spanning segments follow: residues 8 to 28 (LAAL…TSVL), 50 to 70 (VLSI…VVLV), 103 to 123 (LGIG…TPAI), 137 to 157 (PHFG…LFAV), 169 to 189 (FGPV…PHIV), 215 to 235 (FIIL…YADL), 247 to 267 (WFSV…ALLL), 285 to 305 (ALIP…QALI), 337 to 357 (IYIP…VVMF), 366 to 386 (AYGI…FFVI), 393 to 413 (PLAL…AFFG), and 419 to 439 (LLQG…LMMT).

It belongs to the HAK/KUP transporter (TC 2.A.72) family.

It is found in the cell inner membrane. The catalysed reaction is K(+)(in) + H(+)(in) = K(+)(out) + H(+)(out). Transport of potassium into the cell. Likely operates as a K(+):H(+) symporter. The sequence is that of Probable potassium transport system protein Kup from Paracidovorax citrulli (strain AAC00-1) (Acidovorax citrulli).